Consider the following 571-residue polypeptide: Proline--tRNA ligase (571 aa).

It belongs to the class-II aminoacyl-tRNA synthetase family. ProS type 1 subfamily. As to quaternary structure, homodimer.

Its subcellular location is the cytoplasm. It catalyses the reaction tRNA(Pro) + L-proline + ATP = L-prolyl-tRNA(Pro) + AMP + diphosphate. Catalyzes the attachment of proline to tRNA(Pro) in a two-step reaction: proline is first activated by ATP to form Pro-AMP and then transferred to the acceptor end of tRNA(Pro). As ProRS can inadvertently accommodate and process non-cognate amino acids such as alanine and cysteine, to avoid such errors it has two additional distinct editing activities against alanine. One activity is designated as 'pretransfer' editing and involves the tRNA(Pro)-independent hydrolysis of activated Ala-AMP. The other activity is designated 'posttransfer' editing and involves deacylation of mischarged Ala-tRNA(Pro). The misacylated Cys-tRNA(Pro) is not edited by ProRS. In Vibrio vulnificus (strain YJ016), this protein is Proline--tRNA ligase.